Reading from the N-terminus, the 195-residue chain is Killer cell lectin-like receptor subfamily G member 1 (195 aa).

Topologically, residues 1-38 (MTDSVIYSMLELPTATQAQNDYGPQQKSSSSRPSCSCL) are cytoplasmic. An ITIM motif motif is present at residues 5–10 (VIYSML). The helical; Signal-anchor for type II membrane protein transmembrane segment at 39–59 (VAIALGLLTAVLLSVLLYQWI) threads the bilayer. Residues 60 to 195 (LCQGSNYSTC…KCPFADQALF (136 aa)) are Extracellular-facing. A glycan (N-linked (GlcNAc...) asparagine) is linked at Asn65. An intrachain disulfide couples Cys75 to Cys86. Positions 82 to 185 (YGNHCYYFSV…CEVPLHWVCK (104 aa)) constitute a C-type lectin domain. Residues Asn97, Asn137, and Asn150 are each glycosylated (N-linked (GlcNAc...) asparagine). 2 cysteine pairs are disulfide-bonded: Cys103–Cys184 and Cys163–Cys176.

In terms of assembly, forms a monomer and homodimer; disulfide-linked. Interacts (via ITIM motif) with PTPN11 and INPP5D. In terms of tissue distribution, expressed specifically on natural killer (NK) cells and T-cells, mainly CD8 T-cells.

It is found in the cell membrane. In terms of biological role, plays an inhibitory role on natural killer (NK) cells and T-cell functions upon binding to their non-MHC ligands. May mediate missing self recognition by binding to a highly conserved site on classical cadherins, enabling it to monitor expression of E-cadherin/CDH1, N-cadherin/CDH2 and R-cadherin/CDH4 on target cells. This Homo sapiens (Human) protein is Killer cell lectin-like receptor subfamily G member 1 (KLRG1).